A 109-amino-acid polypeptide reads, in one-letter code: Transcription initiation factor IIA subunit 2 (109 aa).

It belongs to the TFIIA subunit 2 family. TFIIA is a heterodimer of the large unprocessed subunit 1 and a small subunit gamma. It was originally believed to be a heterotrimer of an alpha (p35), a beta (p19) and a gamma subunit (p12). Interacts with NCOA6 general coactivator. TFIIA forms a complex with TBP. Interacts with HSF1 (via transactivation domain). Part of TBP-based Pol II pre-initiation complex (PIC), in which Pol II core assembles with general transcription factors and other specific initiation factors including GTF2E1, GTF2E2, GTF2F1, GTF2F2, TCEA1, ERCC2, ERCC3, GTF2H2, GTF2H3, GTF2H4, GTF2H5, GTF2A1, GTF2A2, GTF2B and TBP; this large multi-subunit PIC complex mediates DNA unwinding and targets Pol II core to the transcription start site where the first phosphodiester bond forms.

It is found in the nucleus. Its function is as follows. TFIIA is a component of the transcription machinery of RNA polymerase II and plays an important role in transcriptional activation. TFIIA in a complex with TBP mediates transcriptional activity. This chain is Transcription initiation factor IIA subunit 2 (Gtf2a2), found in Rattus norvegicus (Rat).